A 397-amino-acid chain; its full sequence is Protein PEP-RELATED DEVELOPMENT ARRESTED 1, chloroplastic (397 aa).

Residues 1-52 constitute a chloroplast transit peptide; that stretch reads MLQSIHLRFSSTPSPSKRESLIIPSVICSFPFTSSSFRPKQTQKLKRLVQFC. The segment covering 315-334 has biased composition (basic and acidic residues); sequence KDEGADNLSKEDDSSTEGRK. Residues 315–351 are disordered; it reads KDEGADNLSKEDDSSTEGRKPSGLNGRGSVTGRKPLP.

In terms of assembly, interacts with FSD2 and MRL7. Highly expressed in young leaves, shoots and flowers. Expressed at low levels in stems and siliques.

The protein localises to the plastid. Its subcellular location is the chloroplast stroma. The protein resides in the chloroplast nucleoid. In terms of biological role, plays an essential role in early steps of chloroplast development. May be involved in the redox control of plastid gene expression by maintening the redox state around chloroplast nucleoids. May positively regulate plastid-encoded RNA polymerase (PEP) activity, through binding to FSD2. This is Protein PEP-RELATED DEVELOPMENT ARRESTED 1, chloroplastic (PRDA1) from Arabidopsis thaliana (Mouse-ear cress).